Consider the following 132-residue polypeptide: Small ribosomal subunit protein uS8 (132 aa).

It belongs to the universal ribosomal protein uS8 family. In terms of assembly, part of the 30S ribosomal subunit. Contacts proteins S5 and S12.

Functionally, one of the primary rRNA binding proteins, it binds directly to 16S rRNA central domain where it helps coordinate assembly of the platform of the 30S subunit. The sequence is that of Small ribosomal subunit protein uS8 from Rickettsia akari (strain Hartford).